A 370-amino-acid chain; its full sequence is Cytochrome b (370 aa).

A run of 4 helical transmembrane segments spans residues F25 to V45, W69 to I90, W105 to L125, and F170 to M190. Residues H75 and H89 each contribute to the heme b site. Heme b contacts are provided by H174 and H188. H193 serves as a coordination point for a ubiquinone. A run of 4 helical transmembrane segments spans residues Y218–Y238, L280–H300, F312–T332, and F339–P358.

It belongs to the cytochrome b family. As to quaternary structure, the cytochrome bc1 complex contains 3 respiratory subunits (MT-CYB, CYC1 and UQCRFS1), 2 core proteins (UQCRC1 and UQCRC2) and probably 6 low-molecular weight proteins. It depends on heme b as a cofactor.

It is found in the mitochondrion inner membrane. In terms of biological role, component of the ubiquinol-cytochrome c reductase complex (complex III or cytochrome b-c1 complex) that is part of the mitochondrial respiratory chain. The b-c1 complex mediates electron transfer from ubiquinol to cytochrome c. Contributes to the generation of a proton gradient across the mitochondrial membrane that is then used for ATP synthesis. In Corallus hortulanus enydris (Garden tree boa), this protein is Cytochrome b (MT-CYB).